Consider the following 380-residue polypeptide: Crotonobetainyl-CoA reductase (380 aa).

It belongs to the acyl-CoA dehydrogenase family. As to quaternary structure, homotetramer. FAD is required as a cofactor.

The protein resides in the cytoplasm. The enzyme catalyses 4-(trimethylamino)butanoyl-CoA + oxidized [electron-transfer flavoprotein] + H(+) = crotonobetainyl-CoA + reduced [electron-transfer flavoprotein]. It functions in the pathway amine and polyamine metabolism; carnitine metabolism. Its function is as follows. Catalyzes the reduction of crotonobetainyl-CoA to gamma-butyrobetainyl-CoA. The protein is Crotonobetainyl-CoA reductase of Shigella flexneri serotype 5b (strain 8401).